The sequence spans 328 residues: Tetraacyldisaccharide 4'-kinase (328 aa).

55-62 (TAGGNGKT) lines the ATP pocket.

The protein belongs to the LpxK family.

It catalyses the reaction a lipid A disaccharide + ATP = a lipid IVA + ADP + H(+). Its pathway is glycolipid biosynthesis; lipid IV(A) biosynthesis; lipid IV(A) from (3R)-3-hydroxytetradecanoyl-[acyl-carrier-protein] and UDP-N-acetyl-alpha-D-glucosamine: step 6/6. Transfers the gamma-phosphate of ATP to the 4'-position of a tetraacyldisaccharide 1-phosphate intermediate (termed DS-1-P) to form tetraacyldisaccharide 1,4'-bis-phosphate (lipid IVA). The protein is Tetraacyldisaccharide 4'-kinase of Shigella boydii serotype 18 (strain CDC 3083-94 / BS512).